The chain runs to 145 residues: Oocyte zinc finger protein XlCOF8.4I (145 aa).

The segment at 1–25 (HKREADFCSKGNLTNPEISPVEHYP) is disordered. Residues 123–145 (LSCSECGKCFSTYHVLARHQKTH) form a C2H2-type zinc finger.

The protein belongs to the krueppel C2H2-type zinc-finger protein family.

The protein localises to the nucleus. In terms of biological role, may be involved in transcriptional regulation. The polypeptide is Oocyte zinc finger protein XlCOF8.4I (Xenopus laevis (African clawed frog)).